The following is a 130-amino-acid chain: MSMQDPLADMLTRIRNAQMAEKPVVSMPSSTLKVAVAKVLKDEGYIAGYQISSEVKSSLSIELKYFEGRPVIEEVKRVSRPGLRQYKSSDDLPKVRGGLGVSIVSTSKGVMTDRAARAAGVGGEVLCTVF.

It belongs to the universal ribosomal protein uS8 family. As to quaternary structure, part of the 30S ribosomal subunit. Contacts proteins S5 and S12.

Functionally, one of the primary rRNA binding proteins, it binds directly to 16S rRNA central domain where it helps coordinate assembly of the platform of the 30S subunit. The sequence is that of Small ribosomal subunit protein uS8 from Pseudomonas syringae pv. tomato (strain ATCC BAA-871 / DC3000).